A 392-amino-acid chain; its full sequence is MIMDGKFGKYGGIFVPELLIPALEELERAFLHYRDDRKFMAELEYHLREYAGKPTGLYYARNLSEKLGCRVYLKREDMLHTGAHKINNTIGQALLARYMGKTRIIAETGAGQHGIATAAAGALFGMDVDIYMGTEDVERQKLNVFRMEVSGAEVIPVDSGSRTLKDAINEAMRDWISNVDDTHYLIGSTMGPHPYPTMVKHFQSVIGREAREQILEVEGELPDTVIACVGGGSNAIGIFSAFMDDDVELIGAEGGGEGIESGNHGATLSAGSEGILHGSLSYVLQDGDGQISEAHSVSAGLDYPGVGPEHAHLMDTGRARYEPVTDTEALRGFRLLSRYEGIMPALESAHAIACLERYAEKPENRGKTVIVNLSGRGDKDMFMVAGLLGVGV.

N6-(pyridoxal phosphate)lysine is present on lysine 85.

It belongs to the TrpB family. Tetramer of two alpha and two beta chains. The cofactor is pyridoxal 5'-phosphate.

It carries out the reaction (1S,2R)-1-C-(indol-3-yl)glycerol 3-phosphate + L-serine = D-glyceraldehyde 3-phosphate + L-tryptophan + H2O. The protein operates within amino-acid biosynthesis; L-tryptophan biosynthesis; L-tryptophan from chorismate: step 5/5. In terms of biological role, the beta subunit is responsible for the synthesis of L-tryptophan from indole and L-serine. In Methanothermobacter thermautotrophicus (strain ATCC 29096 / DSM 1053 / JCM 10044 / NBRC 100330 / Delta H) (Methanobacterium thermoautotrophicum), this protein is Tryptophan synthase beta chain 1 (trpB1).